A 465-amino-acid polypeptide reads, in one-letter code: FAD-dependent oxidoreductase pigF (465 aa).

An N-terminal signal peptide occupies residues M1–A17. Residues N95, N138, N260, and N327 are each glycosylated (N-linked (GlcNAc...) asparagine). D444 is lipidated: GPI-anchor amidated aspartate. The propeptide at S445 to L465 is removed in mature form. N451 carries N-linked (GlcNAc...) asparagine glycosylation.

The protein belongs to the beta-cyclopiazonate dehydrogenase family. It depends on FAD as a cofactor.

It localises to the cell membrane. It participates in secondary metabolite biosynthesis. Its function is as follows. FAD-dependent oxidoreductase; part of the gene cluster that mediates the biosynthesis of azaphilone pigments (MonAzPs), a complex mixture of compounds with a common azaphilone skeleton very widely used as food colorants. Within the pathway, pigF desaturates C6(7) to afford the orange and red pigments from yellow pigments. The first step of the pathway is performed by the nrPKS pigA that forms the hexaketide precursor from successive condensations of five malonyl-CoA units, with a simple acetyl-CoA starter unit. The role of esterase pigG is not clear, but it may play at most a supplementary role in the formation of the benzaldehyde produced by the pigA nrPKS. This very reactive benzaldehyde is intercepted by the pigC ketoreductase that to provide the first stable enzyme-free MonAzPs intermediate, 6-(4-hydroxy-2-oxopentyl)-3-methyl-2,4-dioxocyclohexane carbaldehyde, also known as M7PKS-1. The FAD-dependent monooxygenase pigN hydroxylates M7PKS-1 at C-4, which triggers the formation of the pyran ring. PigJ, pigK and pigD are involved in the acetylation of the pyran ring. PigJ and pigK form the two subunits of a dedicated fungal FAS that produces the side chain fatty acyl moiety of MonAzPs and pigD transfers the fatty acyl chain to the C-4 alcohol. PigM and pigO are involved in the elimination of the omega-1 alcohol. PigM acts as an O-acetyltransferase that synthesizes the putative O-11 acetyl intermediate whereas pigO eliminates acetic acid to yield an intermediate with a C10(11) double bond. The dehydration of the C-11 alcohol followed by the reduction of the C6(7) double bond by the NAD(P)H-dependent oxidoreductase pigE increases the electrophilicity of the C-5 ketone of the resulting acyl benzopyran. This in turn sets up the C-5 ketone for an intramolecular Knoevenagel aldol condensation with the C-20 enol of the side chain. This condensation affords the characteristic linear tricyclic carbon skeletons of the yellow pigments that serve as the common precursors for the classical yellow pigments monascin and ankaflavin, orange pigments rubopunctatin and monascorubrin, and red pigments ribropunctamine and monascorubramine. The FAD-dependent oxidoreductase pigF is especially invoved in the biosynthesis of orange and red pigments via desaturation of C6(7). The polypeptide is FAD-dependent oxidoreductase pigF (Monascus ruber (Mold)).